The primary structure comprises 334 residues: Phosphate acyltransferase (334 aa).

The protein belongs to the PlsX family. In terms of assembly, homodimer. Probably interacts with PlsY.

It localises to the cytoplasm. The catalysed reaction is a fatty acyl-[ACP] + phosphate = an acyl phosphate + holo-[ACP]. It participates in lipid metabolism; phospholipid metabolism. In terms of biological role, catalyzes the reversible formation of acyl-phosphate (acyl-PO(4)) from acyl-[acyl-carrier-protein] (acyl-ACP). This enzyme utilizes acyl-ACP as fatty acyl donor, but not acyl-CoA. The protein is Phosphate acyltransferase of Mycoplasmopsis agalactiae (strain NCTC 10123 / CIP 59.7 / PG2) (Mycoplasma agalactiae).